A 358-amino-acid chain; its full sequence is 3-dehydroquinate synthase (358 aa).

NAD(+) contacts are provided by residues 75–80 (SGEGSK), 109–113 (GVLGD), 133–134 (TT), lysine 146, and lysine 155. Glutamate 188, histidine 245, and histidine 262 together coordinate Zn(2+).

The protein belongs to the sugar phosphate cyclases superfamily. Dehydroquinate synthase family. It depends on Co(2+) as a cofactor. Zn(2+) is required as a cofactor. Requires NAD(+) as cofactor.

It localises to the cytoplasm. It catalyses the reaction 7-phospho-2-dehydro-3-deoxy-D-arabino-heptonate = 3-dehydroquinate + phosphate. The protein operates within metabolic intermediate biosynthesis; chorismate biosynthesis; chorismate from D-erythrose 4-phosphate and phosphoenolpyruvate: step 2/7. In terms of biological role, catalyzes the conversion of 3-deoxy-D-arabino-heptulosonate 7-phosphate (DAHP) to dehydroquinate (DHQ). The chain is 3-dehydroquinate synthase from Methylacidiphilum infernorum (isolate V4) (Methylokorus infernorum (strain V4)).